Consider the following 367-residue polypeptide: Aurora kinase (367 aa).

2 stretches are compositionally biased toward polar residues: residues 1–29 and 37–48; these read MQRNSLVNIKLNANSPSKKTTTRPNTSRI and HSPQQRNPNSKI. The tract at residues 1-52 is disordered; that stretch reads MQRNSLVNIKLNANSPSKKTTTRPNTSRINKPWRISHSPQQRNPNSKIPSPV. Serine 5 carries the phosphoserine; by autocatalysis modification. At serine 76 the chain carries Phosphoserine. The Protein kinase domain maps to 104-355; it reads FELGKKLGKG…LGDVKMHPWI (252 aa). ATP-binding positions include 110–118 and lysine 133; that span reads LGKGKFGKV. The active-site Proton acceptor is the aspartate 227. A Phosphothreonine; by autocatalysis modification is found at threonine 260.

The protein belongs to the protein kinase superfamily. Ser/Thr protein kinase family. Aurora subfamily. Component of the CPC complex at least composed of IPL1, BIR1 and SLI15.

The protein resides in the nucleus. It is found in the cytoplasm. The protein localises to the cytoskeleton. It localises to the spindle. Its subcellular location is the chromosome. The protein resides in the centromere. It is found in the kinetochore. The catalysed reaction is L-seryl-[protein] + ATP = O-phospho-L-seryl-[protein] + ADP + H(+). The enzyme catalyses L-threonyl-[protein] + ATP = O-phospho-L-threonyl-[protein] + ADP + H(+). Functionally, component of the chromosomal passenger complex (CPC), a complex that acts as a key regulator of chromosome segregation and cytokinesis. Has a role in error-correction of aberrent kinetochore-microtubule attachments to ensure that sister kinetochores become bioriented and connect to opposite poles by promoting spindle assembly checkpoint signaling. Acts in opposition to the phosphatase PP1. Not required for kinetochore detachment from microtubules during replication of centromeric DNA. Phosphorylates histone H3 to form H3S10ph during mitosis and meiosis. Phosphorylates CNN1, which contributes to the enrichment of CNN1 on anaphase kinetochores. Phosphorylates RGD1. The chain is Aurora kinase (IPL1) from Saccharomyces cerevisiae (strain ATCC 204508 / S288c) (Baker's yeast).